A 271-amino-acid polypeptide reads, in one-letter code: Pyrroline-5-carboxylate reductase (271 aa).

The protein belongs to the pyrroline-5-carboxylate reductase family.

It localises to the cytoplasm. The enzyme catalyses L-proline + NADP(+) = (S)-1-pyrroline-5-carboxylate + NADPH + 2 H(+). The catalysed reaction is L-proline + NAD(+) = (S)-1-pyrroline-5-carboxylate + NADH + 2 H(+). Its pathway is amino-acid biosynthesis; L-proline biosynthesis; L-proline from L-glutamate 5-semialdehyde: step 1/1. In terms of biological role, catalyzes the reduction of 1-pyrroline-5-carboxylate (PCA) to L-proline. The protein is Pyrroline-5-carboxylate reductase of Staphylococcus haemolyticus (strain JCSC1435).